Consider the following 727-residue polypeptide: MAFQKAVKGTILVGGGALATVLGLSPFAHYRRKQVSLAYVEAAGYLTEPVNREPPSREAQLMTLKNTPEFDILVIGGGATGCGCALDAVTRGLKTALVERDDFSSGTSSRSTKLIHGGVRYLQKAIMNLDVEQYRMVKEALHERANLLEIAPHLSAPLPIMLPLYKWWQLPYYWVGIKMYDLVAGSQCLKSSYVLSKSRALEHFPMLQKDKLVGAIVYYDGQHNDARMNLAIALTAARYGAATANYMEVVSLLKKTDPETGKERVSGARCKDVLTGQEFDVRAKCVINASGPFTDSVRKMDDKNVVPICQPSAGVHIVMPGYYSPENMGLLDPATSDGRVIFFLPWEKMTIAGTTDTPTDVTHHPIPSEEDINFILNEVRNYLSSDVEVRRGDVLAAWSGIRPLVTDPKSADTQSISRNHVVDISDSGLITIAGGKWTTYRSMAEDTVDAAVKFHNLNAGPSRTVGLFLQGGKDWSPTLYIRLVQDYGLESEVAQHLAKTYGDKAFEVAKMASVTGKRWPVVGVRLVSEFPYIEAEVKYGIKEYACTAVDMISRRTRLAFLNVQAAEEALPRIVELMGRELNWSELRKQEELETATRFLYYEMGYKSRTEQLTDSTEISLLPSDIDRYKKRFHKFDEDEKGFITIVDVQRVLESINVQMDENTLHEILCEVDLNKNGQVELHEFLQLMSAVQKGRVSGSRLAILMKTAEENLDRRVPIPVDRSCGGL.

A mitochondrion-targeting transit peptide spans 1–42 (MAFQKAVKGTILVGGGALATVLGLSPFAHYRRKQVSLAYVEA). Residue 71–99 (DILVIGGGATGCGCALDAVTRGLKTALVE) coordinates FAD. Tyrosine 601 is subject to Phosphotyrosine. EF-hand domains are found at residues 623 to 658 (SDID…INVQ) and 659 to 694 (MDEN…VQKG). Aspartate 672, asparagine 674, asparagine 676, glutamine 678, and glutamate 683 together coordinate Ca(2+).

This sequence belongs to the FAD-dependent glycerol-3-phosphate dehydrogenase family. The cofactor is FAD.

The protein resides in the mitochondrion inner membrane. It carries out the reaction a quinone + sn-glycerol 3-phosphate = dihydroxyacetone phosphate + a quinol. The protein operates within polyol metabolism; glycerol degradation via glycerol kinase pathway; glycerone phosphate from sn-glycerol 3-phosphate (anaerobic route): step 1/1. With respect to regulation, calcium-binding enhance the activity of the enzyme. Calcium-responsive mitochondrial glycerol-3-phosphate dehydrogenase which seems to be a key component of the pancreatic beta-cell glucose-sensing device. The polypeptide is Glycerol-3-phosphate dehydrogenase, mitochondrial (Mus musculus (Mouse)).